The sequence spans 95 residues: uncharacterized protein (95 aa).

Residues 12–32 traverse the membrane as a helical segment; sequence IASLVVSVVVLLIGLILWFFI.

It is found in the cell membrane. This is an uncharacterized protein from Escherichia coli O6:H1 (strain CFT073 / ATCC 700928 / UPEC).